Reading from the N-terminus, the 450-residue chain is Solute carrier family 52, riboflavin transporter, member 2 (450 aa).

The next 5 helical transmembrane spans lie at 14–34, 47–67, 79–99, 114–136, and 147–167; these read LLVA…WVEL, LPSY…LVTL, IPIQ…APLW, FLTL…LPFL, and FFLG…AQGV. Asn178 carries an N-linked (GlcNAc...) asparagine glycan. Residues 201–221 form a helical membrane-spanning segment; it reads FFWVLTALLGTSAAAFQGLLL. Residues 230-268 form a disordered region; sequence ATMGTGLRVETPGTEEEEEEEEASPLQEPPGQVASIVSS. Residues 242–252 are compositionally biased toward acidic residues; the sequence is GTEEEEEEEEA. 5 helical membrane-spanning segments follow: residues 282 to 302, 317 to 337, 344 to 364, 371 to 391, and 409 to 429; these read ACLL…LPAV, LAVV…MAVL, LYGL…LAVL, VGTS…AGVF, and ALLA…IAMF.

It belongs to the riboflavin transporter family. In terms of tissue distribution, highly expressed in the placenta and small intestine, moderately in the kidney, colon, lung, prostate, uterus, and thymus, and weakly in all other tissues.

The protein resides in the cell membrane. The catalysed reaction is riboflavin(in) = riboflavin(out). With respect to regulation, riboflavin transport is Na(+)-independent but moderately pH-sensitive. Activity is strongly inhibited by riboflavin analogs, such as lumiflavin. Weakly inhibited by flavin adenine dinucleotide (FAD) and flavin mononucleotide (FMN). Its function is as follows. Plasma membrane transporter mediating the uptake by cells of the water soluble vitamin B2/riboflavin that plays a key role in biochemical oxidation-reduction reactions of the carbohydrate, lipid, and amino acid metabolism. May also act as a receptor for 4-hydroxybutyrate. The chain is Solute carrier family 52, riboflavin transporter, member 2 (Slc52a2) from Rattus norvegicus (Rat).